The following is a 456-amino-acid chain: UPF0210 protein Dde_3704 (456 aa).

It belongs to the UPF0210 family. As to quaternary structure, homodimer.

The sequence is that of UPF0210 protein Dde_3704 from Oleidesulfovibrio alaskensis (strain ATCC BAA-1058 / DSM 17464 / G20) (Desulfovibrio alaskensis).